A 360-amino-acid polypeptide reads, in one-letter code: D-alanine--D-alanine ligase (360 aa).

The ATP-grasp domain occupies 146–352 (KICAEHAGLH…FSQLIDRLLQ (207 aa)). Position 179–234 (179–234 (LEEFTLPFFVKPASQGSSIGITKVHRPEELAAALEKAFMVDTKVLIEKTIEGREIE)) interacts with ATP. Asp-305, Glu-319, and Asn-321 together coordinate Mg(2+).

The protein belongs to the D-alanine--D-alanine ligase family. The cofactor is Mg(2+). Mn(2+) is required as a cofactor.

The protein localises to the cytoplasm. It carries out the reaction 2 D-alanine + ATP = D-alanyl-D-alanine + ADP + phosphate + H(+). It functions in the pathway cell wall biogenesis; peptidoglycan biosynthesis. In terms of biological role, cell wall formation. The chain is D-alanine--D-alanine ligase from Prosthecochloris aestuarii (strain DSM 271 / SK 413).